Reading from the N-terminus, the 327-residue chain is Phenylalanine--tRNA ligase alpha subunit (327 aa).

Glutamate 253 contacts Mg(2+).

Belongs to the class-II aminoacyl-tRNA synthetase family. Phe-tRNA synthetase alpha subunit type 1 subfamily. As to quaternary structure, tetramer of two alpha and two beta subunits. It depends on Mg(2+) as a cofactor.

The protein localises to the cytoplasm. The enzyme catalyses tRNA(Phe) + L-phenylalanine + ATP = L-phenylalanyl-tRNA(Phe) + AMP + diphosphate + H(+). This is Phenylalanine--tRNA ligase alpha subunit from Laribacter hongkongensis (strain HLHK9).